The following is an 88-amino-acid chain: ATP synthase epsilon chain (88 aa).

Belongs to the ATPase epsilon chain family. In terms of assembly, F-type ATPases have 2 components, CF(1) - the catalytic core - and CF(0) - the membrane proton channel. CF(1) has five subunits: alpha(3), beta(3), gamma(1), delta(1), epsilon(1). CF(0) has three main subunits: a, b and c.

The protein resides in the cell inner membrane. Functionally, produces ATP from ADP in the presence of a proton gradient across the membrane. The protein is ATP synthase epsilon chain (atpC) of Chlorobium limicola.